Reading from the N-terminus, the 237-residue chain is Leucyl/phenylalanyl-tRNA--protein transferase (237 aa).

It belongs to the L/F-transferase family.

Its subcellular location is the cytoplasm. It carries out the reaction N-terminal L-lysyl-[protein] + L-leucyl-tRNA(Leu) = N-terminal L-leucyl-L-lysyl-[protein] + tRNA(Leu) + H(+). It catalyses the reaction N-terminal L-arginyl-[protein] + L-leucyl-tRNA(Leu) = N-terminal L-leucyl-L-arginyl-[protein] + tRNA(Leu) + H(+). The enzyme catalyses L-phenylalanyl-tRNA(Phe) + an N-terminal L-alpha-aminoacyl-[protein] = an N-terminal L-phenylalanyl-L-alpha-aminoacyl-[protein] + tRNA(Phe). In terms of biological role, functions in the N-end rule pathway of protein degradation where it conjugates Leu, Phe and, less efficiently, Met from aminoacyl-tRNAs to the N-termini of proteins containing an N-terminal arginine or lysine. In Aromatoleum aromaticum (strain DSM 19018 / LMG 30748 / EbN1) (Azoarcus sp. (strain EbN1)), this protein is Leucyl/phenylalanyl-tRNA--protein transferase.